A 511-amino-acid polypeptide reads, in one-letter code: 2,3-bisphosphoglycerate-independent phosphoglycerate mutase (511 aa).

The Mn(2+) site is built by Asp-12 and Ser-62. Ser-62 functions as the Phosphoserine intermediate in the catalytic mechanism. Substrate-binding positions include His-123, 153-154, Arg-185, Arg-191, 260-263, and Lys-335; these read RD and RPDR. Mn(2+) contacts are provided by Asp-402, His-406, Asp-443, His-444, and His-462.

This sequence belongs to the BPG-independent phosphoglycerate mutase family. As to quaternary structure, monomer. Mn(2+) is required as a cofactor.

The catalysed reaction is (2R)-2-phosphoglycerate = (2R)-3-phosphoglycerate. Its pathway is carbohydrate degradation; glycolysis; pyruvate from D-glyceraldehyde 3-phosphate: step 3/5. In terms of biological role, catalyzes the interconversion of 2-phosphoglycerate and 3-phosphoglycerate. This Acetivibrio thermocellus (strain ATCC 27405 / DSM 1237 / JCM 9322 / NBRC 103400 / NCIMB 10682 / NRRL B-4536 / VPI 7372) (Clostridium thermocellum) protein is 2,3-bisphosphoglycerate-independent phosphoglycerate mutase.